We begin with the raw amino-acid sequence, 148 residues long: Sec-independent protein translocase protein TatB (148 aa).

Residues Met1–Gly21 traverse the membrane as a helical segment. The interval Glu85–Pro148 is disordered. A compositionally biased stretch (low complexity) spans Ala107–Pro148.

The protein belongs to the TatB family. In terms of assembly, the Tat system comprises two distinct complexes: a TatABC complex, containing multiple copies of TatA, TatB and TatC subunits, and a separate TatA complex, containing only TatA subunits. Substrates initially bind to the TatABC complex, which probably triggers association of the separate TatA complex to form the active translocon.

It localises to the cell inner membrane. In terms of biological role, part of the twin-arginine translocation (Tat) system that transports large folded proteins containing a characteristic twin-arginine motif in their signal peptide across membranes. Together with TatC, TatB is part of a receptor directly interacting with Tat signal peptides. TatB may form an oligomeric binding site that transiently accommodates folded Tat precursor proteins before their translocation. This chain is Sec-independent protein translocase protein TatB, found in Pseudomonas fluorescens (strain Pf0-1).